A 221-amino-acid chain; its full sequence is Toll/interleukin-1 receptor domain-containing adapter protein (221 aa).

Residues 1 to 82 (MASSTSLPAP…HASDSGSSRW (82 aa)) form a disordered region. Residues 48-67 (SQPTSQDSPLPPSLSSVTSP) are compositionally biased toward low complexity. Residues 84–213 (KDYDVCVCHS…GGFRQVKEAV (130 aa)) form the TIR domain. Disulfide bonds link Cys-89–Cys-134 and Cys-142–Cys-174.

As to quaternary structure, homodimer. Also forms heterodimers with MYD88. May interact with PIK3AP1. Interacts with TLR4 and IRAK2 via their respective TIR domains. Interacts with BMX and TBK1. Interacts with EIF2AK2. Does not interact with IRAK1, nor TLR9. Interacts with TLR2. Interacts with RAGE/AGER. (Microbial infection) In case of infection, interacts with B.melitensis protein TcpB (AC Q8YF53); TcpB abolishes the TLR4-TIRAP interaction and downstream signaling. Post-translationally, phosphorylated by IRAK1 and IRAK4. Also phosphorylated by BTK. Polyubiquitinated. Polyubiquitination follows phosphorylation by BTK and leads to TIRAP degradation. As to expression, highly expressed in liver, kidney, spleen, skeletal muscle and heart. Also detected in peripheral blood leukocytes, lung, placenta, small intestine, thymus, colon and brain.

It localises to the cytoplasm. The protein localises to the cell membrane. It is found in the membrane. Adapter involved in TLR2, TLR4 and RAGE signaling pathways in the innate immune response. Acts via IRAK2 and TRAF-6, leading to the activation of NF-kappa-B, MAPK1, MAPK3 and JNK, and resulting in cytokine secretion and the inflammatory response. Positively regulates the production of TNF-alpha (TNF) and interleukin-6 (IL6). The polypeptide is Toll/interleukin-1 receptor domain-containing adapter protein (TIRAP) (Homo sapiens (Human)).